We begin with the raw amino-acid sequence, 226 residues long: DNA mismatch repair protein MutH (226 aa).

It belongs to the MutH family.

The protein resides in the cytoplasm. In terms of biological role, sequence-specific endonuclease that cleaves unmethylated GATC sequences. It is involved in DNA mismatch repair. In Haemophilus ducreyi (strain 35000HP / ATCC 700724), this protein is DNA mismatch repair protein MutH.